We begin with the raw amino-acid sequence, 202 residues long: Large ribosomal subunit protein uL4 (202 aa).

Over residues 42 to 52 the composition is skewed to polar residues; that stretch reads GTKAQKSRSQV. The interval 42–70 is disordered; the sequence is GTKAQKSRSQVSGTTKKSKKQKGGGARHG.

It belongs to the universal ribosomal protein uL4 family. In terms of assembly, part of the 50S ribosomal subunit.

In terms of biological role, one of the primary rRNA binding proteins, this protein initially binds near the 5'-end of the 23S rRNA. It is important during the early stages of 50S assembly. It makes multiple contacts with different domains of the 23S rRNA in the assembled 50S subunit and ribosome. Forms part of the polypeptide exit tunnel. The chain is Large ribosomal subunit protein uL4 from Xylella fastidiosa (strain Temecula1 / ATCC 700964).